Here is a 377-residue protein sequence, read N- to C-terminus: Succinyl-diaminopimelate desuccinylase (377 aa).

Position 68 (His68) interacts with Zn(2+). Residue Asp70 is part of the active site. Asp101 is a binding site for Zn(2+). Glu135 acts as the Proton acceptor in catalysis. Residues Glu136, Glu164, and His350 each coordinate Zn(2+).

The protein belongs to the peptidase M20A family. DapE subfamily. As to quaternary structure, homodimer. The cofactor is Zn(2+). It depends on Co(2+) as a cofactor.

It carries out the reaction N-succinyl-(2S,6S)-2,6-diaminopimelate + H2O = (2S,6S)-2,6-diaminopimelate + succinate. The protein operates within amino-acid biosynthesis; L-lysine biosynthesis via DAP pathway; LL-2,6-diaminopimelate from (S)-tetrahydrodipicolinate (succinylase route): step 3/3. Functionally, catalyzes the hydrolysis of N-succinyl-L,L-diaminopimelic acid (SDAP), forming succinate and LL-2,6-diaminopimelate (DAP), an intermediate involved in the bacterial biosynthesis of lysine and meso-diaminopimelic acid, an essential component of bacterial cell walls. The sequence is that of Succinyl-diaminopimelate desuccinylase from Aliivibrio fischeri (strain ATCC 700601 / ES114) (Vibrio fischeri).